Here is a 306-residue protein sequence, read N- to C-terminus: Serine/threonine-protein kinase mug51 (306 aa).

It belongs to the STK19 family.

The catalysed reaction is L-seryl-[protein] + ATP = O-phospho-L-seryl-[protein] + ADP + H(+). The enzyme catalyses L-threonyl-[protein] + ATP = O-phospho-L-threonyl-[protein] + ADP + H(+). In terms of biological role, serine/threonine-protein kinase. Has a role in meiosis. This is Serine/threonine-protein kinase mug51 (mug51) from Schizosaccharomyces pombe (strain 972 / ATCC 24843) (Fission yeast).